A 1178-amino-acid polypeptide reads, in one-letter code: MGPGQAGGALLLRLLMLVQGILNCLAYNVGLPGAKIFSGPSSEQFGYSVQQLTNPQGNWLLVGSPWSGFPENRMGDVYKCPVDLPTATCEKLNLQNSASISNVTEIKTNMSLGLTLTRNPGTGGFLTCGPLWAHQCGNQYYATGICSDVSPDFQFLTSFSPAVQACPSLVDVVVVCDESNSIYPWEAVKNFLVKFVTGLDIGPKKTQVALIQYANEPRIIFNLNDFETKEDMVQATSETRQHGGDLTNTFRAIEFARDYAYSQTSGGRPGATKVMVVVTDGESHDGSKLKTVIQQCNDDEILRFGIAVLGYLNRNALDTKNLIKEIKAIASTPTERYFFNVADEAALLEKAGTLGEQIFSIEGTVQGGDNFQMEMAQVGFSADYAPQNDILMLGAVGAFDWSGTLVQETSHKPVIFPKQAFDQVLQDRNHSSFLGYSVAAISTEDGVHFVAGAPRANYTGQIVLYSVNKQGNVTVIQSHRGDQIGSYFGSVLCSVDVDKDTITDVLLVGAPTYMNDLKKEEGKVYLFTITKGILNQHQFLEGPEGTGNARFGSAIAALSDINMDGFNDVIVGSPVENENSGAVYIYNGHQGTIRTKYSQKILGSNGAFRRHLQFFGRSLDGYGDLNGDSITDVSIGALGQVIQLWSQSIADVAIEALFTPDKITLLNKDAKITLKLCFRAEFRPAGQNNQVAILFNMTLDADGHSSRVTSRGVFRENSERFLQKNMVVNEVQKCSEHHISIQKPSDVVNPLDLRVDISLENPGTSPALEAYSETVKVFSIPFYKECGSDGICISDLILDVQQLPAIQTQSFIVSNQNKRLTFSVILKNRGESAYNTVVLAEFSENLFFASFSMPVDGTEVTCEVGSSQKSVTCDVGYPALKSEQQVTFTINFDFNLQNLQNQAAINFQAFSESQETNKADNSVSLTIPLLYDAELHLTRSTNINFYEISSDENAPSVIKSVEDIGPKFIFSLKVTAGSAPVSMALVTIHIPQYTKEKNPLLYLTGIQTDQAGDISCTAEINPLKLPHTAPSVSFKNENFRHTKELDCRTTSCSNITCWLKDLHMKAEYFINVTTRVWNRTFAASTFQTVQLTAAAEIDTHNPQLFVIEENAVTIPLMIMKPTEKAEVPTGVIIGSIIAGILLLLAMTAGLWKLGFFKRQYKKMGQNPDEMDETTELNS.

Residues 1–26 (MGPGQAGGALLLRLLMLVQGILNCLA) form the signal peptide. Residues 27–1129 (YNVGLPGAKI…KPTEKAEVPT (1103 aa)) lie on the Extracellular side of the membrane. 2 FG-GAP repeats span residues 31-89 (LPGA…TATC) and 98-158 (ASIS…FLTS). C80 and C89 are oxidised to a cystine. Residues N102 and N109 are each glycosylated (N-linked (GlcNAc...) asparagine). The VWFA domain occupies 185–362 (WEAVKNFLVK…TLGEQIFSIE (178 aa)). FG-GAP repeat units follow at residues 363–417 (GTVQ…VIFP), 420–472 (AFDQ…KQGN), 474–536 (TVIQ…ILNQ), 537–595 (HQFL…TIRT), and 601–661 (ILGS…FTPD). N-linked (GlcNAc...) asparagine glycosylation is found at N429, N457, and N472. The short motif at 480–482 (RGD) is the Cell attachment site element. Residues D496, D498, D500, D504, D560, N562, D564, D568, D624, N626, D628, and D632 each contribute to the Ca(2+) site. Cystine bridges form between C677/C734, C786/C792, C862/C873, C1016/C1047, and C1052/C1057. N-linked (GlcNAc...) asparagine glycosylation is present at N696. N-linked (GlcNAc...) asparagine glycans are attached at residues N1054, N1071, and N1078. The helical transmembrane segment at 1130 to 1151 (GVIIGSIIAGILLLLAMTAGLW) threads the bilayer. Residues 1152-1178 (KLGFFKRQYKKMGQNPDEMDETTELNS) lie on the Cytoplasmic side of the membrane. Residues 1154–1158 (GFFKR) carry the GFFKR motif motif.

The protein belongs to the integrin alpha chain family. As to quaternary structure, heterodimer of an alpha and a beta subunit. Alpha-2 associates with beta-1. Interacts with HPS5 and RAB21.

The protein resides in the membrane. Its function is as follows. Integrin alpha-2/beta-1 is a collagen receptor, being responsible for adhesion of platelets and other cells to collagens, modulation of collagen and collagenase gene expression, force generation and organization of newly synthesized extracellular matrix. It is also a receptor for laminins, collagen C-propeptides and E-cadherin. Mice homozygous for a null mutation in the alpha-2 die very early in embryogenesis. The protein is Integrin alpha-2 (Itga2) of Mus musculus (Mouse).